Here is a 435-residue protein sequence, read N- to C-terminus: Indole diterpene prenyltransferase atmD (435 aa).

Residues 81–82 (AY) and E90 contribute to the L-tryptophan site. Substrate contacts are provided by R103, K190, R261, K263, Y265, Y346, and Y413.

This sequence belongs to the tryptophan dimethylallyltransferase family.

Indole diterpene prenyltransferase; part of the ATM2 gene cluster that mediates the biosynthesis of aflatrem, a tremorgenic mycotoxin with acute neurotoxic effects. Synthesis of geranylgeranyl diphosphate (GGPP) by AtmG (a GGPP synthase) precedes condensation of GGPP with indole 3-glycerol phosphate, followed by epoxidation and cyclization by AtmM (a FAD-dependent monooxygenase) and AtmC (a prenyltransferase) to produce paspaline. AtmB is also essential for paspaline production, but its exact role has not been identified yet. AtmP, a cytochrome P450 monooxygenase, subsequently converts paspaline to 13-desoxypaxilline via PC-M6 by removal of the C-30 methyl group and oxidation at C-10. AtmQ, a cytochrome P450 monooxygenase, then catalyzes the oxidation of 13-desoxypaxilline, first at C-7 to produce paspalicine and then at C-13 to form paspalinine. Finally, AtmD prenylates paspalinine to form aflatrem. The sequence is that of Indole diterpene prenyltransferase atmD from Aspergillus flavus.